Reading from the N-terminus, the 131-residue chain is Translation initiation factor 5A (131 aa).

Hypusine is present on K37.

It belongs to the eIF-5A family.

The protein resides in the cytoplasm. Its function is as follows. Functions by promoting the formation of the first peptide bond. The protein is Translation initiation factor 5A (eIF5A) of Methanococcus maripaludis (strain C5 / ATCC BAA-1333).